Here is a 277-residue protein sequence, read N- to C-terminus: Large ribosomal subunit protein uL2c (277 aa).

Polar residues predominate over residues 1 to 11 (MNTRSYSTFTP). Disordered regions lie at residues 1-47 (MNTR…RNNS) and 254-277 (YSAL…RRRK).

The protein belongs to the universal ribosomal protein uL2 family. In terms of assembly, part of the 50S ribosomal subunit.

It is found in the plastid. It localises to the chloroplast. The protein is Large ribosomal subunit protein uL2c (rpl2) of Cryptomeria japonica (Japanese cedar).